Here is a 396-residue protein sequence, read N- to C-terminus: Tryptophan synthase beta chain (396 aa).

At K86 the chain carries N6-(pyridoxal phosphate)lysine.

This sequence belongs to the TrpB family. In terms of assembly, tetramer of two alpha and two beta chains. The cofactor is pyridoxal 5'-phosphate.

It carries out the reaction (1S,2R)-1-C-(indol-3-yl)glycerol 3-phosphate + L-serine = D-glyceraldehyde 3-phosphate + L-tryptophan + H2O. The protein operates within amino-acid biosynthesis; L-tryptophan biosynthesis; L-tryptophan from chorismate: step 5/5. Its function is as follows. The beta subunit is responsible for the synthesis of L-tryptophan from indole and L-serine. The chain is Tryptophan synthase beta chain from Sodalis glossinidius (strain morsitans).